The sequence spans 212 residues: Ribosomal RNA small subunit methyltransferase G (212 aa).

S-adenosyl-L-methionine contacts are provided by residues glycine 80, leucine 85, alanine 131–glutamate 132, and arginine 146.

It belongs to the methyltransferase superfamily. RNA methyltransferase RsmG family.

The protein localises to the cytoplasm. It catalyses the reaction guanosine(527) in 16S rRNA + S-adenosyl-L-methionine = N(7)-methylguanosine(527) in 16S rRNA + S-adenosyl-L-homocysteine. Functionally, specifically methylates the N7 position of guanine in position 527 of 16S rRNA. This Xanthomonas campestris pv. campestris (strain 8004) protein is Ribosomal RNA small subunit methyltransferase G.